We begin with the raw amino-acid sequence, 405 residues long: Glycosylated lysosomal membrane protein A (405 aa).

An N-terminal signal peptide occupies residues 1 to 25; that stretch reads MGCTRGWRLLLLLGLVCVGALQGRG. The Lumenal portion of the chain corresponds to 26-365; sequence QEESREVSLQ…YGEPPRDSFS (340 aa). Residues Asn-55, Asn-86, Asn-125, Asn-129, Asn-143, Asn-153, Asn-157, Asn-164, Asn-169, Asn-179, Asn-206, Asn-222, Asn-267, Asn-304, and Asn-331 are each glycosylated (N-linked (GlcNAc...) asparagine). Residues 366 to 386 form a helical membrane-spanning segment; that stretch reads ILVICIMAVALGTPLLLLIVG. Residues 387–405 lie on the Cytoplasmic side of the membrane; sequence TLVVTALRHKVYSNYEPIN. The Lysosomal targeting motif signature appears at 401 to 405; that stretch reads YEPIN.

It belongs to the GLMP family. As to quaternary structure, interacts (via lumenal domain) with lysosomal protein MFSD1; the interaction starts while both proteins are still in the endoplasmic reticulum and is required for stabilization of MFSD1 in lysosomes but has no direct effect on its targeting to lysosomes or transporter activity.

Its subcellular location is the lysosome membrane. Its function is as follows. Required to protect lysosomal transporter MFSD1 from lysosomal proteolysis and for MFSD1 lysosomal localization. This Xenopus laevis (African clawed frog) protein is Glycosylated lysosomal membrane protein A (glmp-a).